Reading from the N-terminus, the 294-residue chain is MHPRFETAFAQLPAALQAALAPLIADTYFPAMLSAEQVADVRRQSGLDDDALAFALLPLAAACAQTEISHFNVGAVARGLSGNLYFGGNMEFRGAAMQQTIHAEQSAITHAWMRGETGLAAITVNYTPCGHCRQFMNELNSGLTLRINLPGRAPSQLGDYLPDAFGPRDLDIKTLIFDTENHGYALKGDALTQAAIAAANRSHAPYSQSPSGLAIETRDGEIFTGSYAENAAFNPSLPPLQAALNLMSLNGYAWADIKRVALAERDDATIVQRDATAATLKALGFTNLELVTLA.

CMP/dCMP-type deaminase domains lie at 48-168 and 186-294; these read DDDA…FGPR and LKGD…VTLA. Residue 89–91 participates in substrate binding; that stretch reads NME. Residue His-102 participates in Zn(2+) binding. Catalysis depends on Glu-104, which acts as the Proton donor. Positions 129 and 132 each coordinate Zn(2+).

It belongs to the cytidine and deoxycytidylate deaminase family. As to quaternary structure, homodimer. Zn(2+) serves as cofactor.

The enzyme catalyses cytidine + H2O + H(+) = uridine + NH4(+). The catalysed reaction is 2'-deoxycytidine + H2O + H(+) = 2'-deoxyuridine + NH4(+). Its function is as follows. This enzyme scavenges exogenous and endogenous cytidine and 2'-deoxycytidine for UMP synthesis. The sequence is that of Cytidine deaminase from Cronobacter sakazakii (strain ATCC BAA-894) (Enterobacter sakazakii).